Here is a 66-residue protein sequence, read N- to C-terminus: Phylloseptin-Az3 (66 aa).

An N-terminal signal peptide occupies residues 1–22; it reads MAFLKKSLFLVLFLGLVSLSIC. The propeptide occupies 23–44; that stretch reads EEEKRETEEEEYNQEDDDKSEE. Phenylalanine 65 carries the phenylalanine amide modification.

In terms of tissue distribution, expressed by the skin glands.

Its subcellular location is the secreted. In terms of biological role, has antimicrobial activity. This chain is Phylloseptin-Az3, found in Pithecopus azureus (Orange-legged monkey tree frog).